A 219-amino-acid polypeptide reads, in one-letter code: 7-cyano-7-deazaguanine synthase (219 aa).

ATP is bound at residue 10–20 (FSGGQDSTTCL). Zn(2+) is bound by residues Cys-188, Cys-196, Cys-199, and Cys-202.

It belongs to the QueC family. Zn(2+) serves as cofactor.

It carries out the reaction 7-carboxy-7-deazaguanine + NH4(+) + ATP = 7-cyano-7-deazaguanine + ADP + phosphate + H2O + H(+). The protein operates within purine metabolism; 7-cyano-7-deazaguanine biosynthesis. Functionally, catalyzes the ATP-dependent conversion of 7-carboxy-7-deazaguanine (CDG) to 7-cyano-7-deazaguanine (preQ(0)). This chain is 7-cyano-7-deazaguanine synthase, found in Neisseria meningitidis serogroup B (strain ATCC BAA-335 / MC58).